A 100-amino-acid polypeptide reads, in one-letter code: EKC/KEOPS complex subunit GON7 (100 aa).

Position 1 is an N-acetylmethionine (Met1). A disordered region spans residues 61 to 100 (AAAPDEDLDGDDEDDAEDENNIDNRTNFDGPSAKRPKTPS). Residues 64–81 (PDEDLDGDDEDDAEDENN) show a composition bias toward acidic residues.

In terms of assembly, component of the EKC/KEOPS complex composed of at least GON7, TP53RK, TPRKB, OSGEP and LAGE3; the whole complex dimerizes.

The protein resides in the nucleus. Component of the EKC/KEOPS complex that is required for the formation of a threonylcarbamoyl group on adenosine at position 37 (t(6)A37) in tRNAs that read codons beginning with adenine. The complex is probably involved in the transfer of the threonylcarbamoyl moiety of threonylcarbamoyl-AMP (TC-AMP) to the N6 group of A37. GON7 plays a supporting role to the catalytic subunit OSGEP in the complex. The sequence is that of EKC/KEOPS complex subunit GON7 from Homo sapiens (Human).